A 251-amino-acid chain; its full sequence is Triosephosphate isomerase (251 aa).

9-11 (NWK) contacts substrate. Catalysis depends on His-95, which acts as the Electrophile. The active-site Proton acceptor is the Glu-167. Substrate is bound by residues Gly-173, Ser-213, and 234 to 235 (GG).

Belongs to the triosephosphate isomerase family. As to quaternary structure, homodimer.

The protein localises to the cytoplasm. The enzyme catalyses D-glyceraldehyde 3-phosphate = dihydroxyacetone phosphate. It functions in the pathway carbohydrate biosynthesis; gluconeogenesis. Its pathway is carbohydrate degradation; glycolysis; D-glyceraldehyde 3-phosphate from glycerone phosphate: step 1/1. Functionally, involved in the gluconeogenesis. Catalyzes stereospecifically the conversion of dihydroxyacetone phosphate (DHAP) to D-glyceraldehyde-3-phosphate (G3P). The protein is Triosephosphate isomerase of Geobacter metallireducens (strain ATCC 53774 / DSM 7210 / GS-15).